The chain runs to 352 residues: Guanidino acid hydrolase, mitochondrial (352 aa).

Residues 1-35 (MLRLLASGCARGPGPGVGARPAAGLFHPGRRQSRQ) constitute a mitochondrion transit peptide. The interval 11–49 (RGPGPGVGARPAAGLFHPGRRQSRQASDAPRNQPPSPEF) is disordered. The Mn(2+) site is built by H162, D185, H187, and D189. Residue K193 is modified to N6-acetyllysine. The residue at position 217 (K217) is an N6-acetyllysine; alternate. K217 is subject to N6-succinyllysine; alternate. D276 and D278 together coordinate Mn(2+).

It belongs to the ureohydrolase superfamily. Arginase family. Mn(2+) is required as a cofactor. As to expression, highly expressed in liver and kidney. Also found in skeletal muscle, fetal liver, brain, testis, skin and the gastrointestinal tract. Within brain, expression is higher in the cerebral cortex with lower levels in the medulla and spinal cord.

It localises to the mitochondrion. It catalyses the reaction 3-guanidinopropanoate + H2O = urea + beta-alanine. The enzyme catalyses 4-guanidinobutanoate + H2O = urea + 4-aminobutanoate. The catalysed reaction is taurocyamine + H2O = urea + taurine. It carries out the reaction L-arginine + H2O = urea + L-ornithine. It functions in the pathway nitrogen metabolism; urea cycle; L-ornithine and urea from L-arginine: step 1/1. Its function is as follows. Hydrolyzes linear guanidino acids to form urea and the corresponding amines. Displays specificity for substrates having a negatively charged head group and short chains including taurocyamine, guanidino propanoic and butanoic acids. May protect cells by detoxifying potentially harmful amounts of guanidino acids. Metabolizes L-arginine with low efficiency. The protein is Guanidino acid hydrolase, mitochondrial (AGMAT) of Homo sapiens (Human).